A 366-amino-acid chain; its full sequence is Transcription factor MYB61 (366 aa).

HTH myb-type domains are found at residues 9 to 61 (KQKL…INYL) and 62 to 116 (RPDL…KKKL). 2 consecutive DNA-binding regions (H-T-H motif) follow at residues 37–61 (WSSVPKLAGLQRCGKSCRLRWINYL) and 89–112 (WSQIASRLPGRTDNEIKNLWNSSI). The disordered stretch occupies residues 115–164 (KLKQRGIDPNTHKPISEVESFSDKDKPTTSNNKRSGNDHKSPSSSSATNQ). A compositionally biased stretch (basic and acidic residues) spans 124 to 141 (NTHKPISEVESFSDKDKP).

In terms of tissue distribution, expressed specifically in guard cells. Expressed in sink tissues, such as xylem, roots and developing seeds.

It is found in the nucleus. Functionally, transcription factor that coordinates a small network of downstream target genes required for several aspects of plant growth and development, such as xylem formation and xylem cell differentiation, and lateral root formation. Regulates a specific set of target genes by binding DNA to the AC cis-element 5'-ACCTAC-3'. Functions as a transcriptional regulator of stomatal closure. Plays a role the regulation of stomatal pore size independently of abscisic acid (ABA). Required for seed coat mucilage deposition during the development of the seed coat epidermis. Involved in the induction of trichome initiation and branching by positively regulating GL1 and GL2. Required for gibberellin (GA) biosynthesis and degradation by positively affecting the expression of the enzymes that convert GA9 into the bioactive GA4, as well as the enzymes involved in the degradation of GA4. The protein is Transcription factor MYB61 of Arabidopsis thaliana (Mouse-ear cress).